Reading from the N-terminus, the 473-residue chain is Probable dipeptidase (473 aa).

The active site involves cysteine 10.

It belongs to the peptidase C69 family.

The enzyme catalyses an L-aminoacyl-L-amino acid + H2O = 2 an L-alpha-amino acid. This is Probable dipeptidase from Latilactobacillus sakei (Lactobacillus sakei).